A 263-amino-acid chain; its full sequence is MADAAQQRTLATAFAPPPPLWKHFTPDNLKRLEEIKKEASKGEDGKPQKKKWSPAELRALDLPPELRLLVPPAIPDTGHYSVFGELQNLSTALPSLKDQGITQLYPSSSPADTDRQSPSEPSRPLNHAYYLLKISKSLLLNFLEFVGVLSVSPEQFESKVEDLRNLFINAHHLLNLYRPHQARESLIMMMEEQLSRTKEEIQQMDKLKAEITGVLERLEADGIAAQSHPQQTDEDGRKESETSQKTIEDAQLVWDLLDGKIEG.

The segment covering Met-1–Leu-10 has biased composition (polar residues). 3 disordered regions span residues Met-1–Leu-57, Ile-101–Ser-122, and Gly-222–Ile-247. Residues Phe-24–Pro-47 show a composition bias toward basic and acidic residues. A compositionally biased stretch (polar residues) spans Ile-101–Ala-111. A compositionally biased stretch (basic and acidic residues) spans Glu-234–Ile-247.

This sequence belongs to the Mediator complex subunit 7 family. As to quaternary structure, component of the Mediator complex.

Its subcellular location is the nucleus. Its function is as follows. Component of the Mediator complex, a coactivator involved in the regulated transcription of nearly all RNA polymerase II-dependent genes. Mediator functions as a bridge to convey information from gene-specific regulatory proteins to the basal RNA polymerase II transcription machinery. Mediator is recruited to promoters by direct interactions with regulatory proteins and serves as a scaffold for the assembly of a functional preinitiation complex with RNA polymerase II and the general transcription factors. This Aspergillus niger (strain ATCC MYA-4892 / CBS 513.88 / FGSC A1513) protein is Mediator of RNA polymerase II transcription subunit 7 (med7).